A 162-amino-acid polypeptide reads, in one-letter code: Caveolin-2 (162 aa).

At Met1–Lys86 the chain is on the cytoplasmic side. Tyr19 carries the post-translational modification Phosphotyrosine; by SRC. Phosphoserine occurs at positions 20 and 23. A Phosphotyrosine; by SRC modification is found at Tyr27. Ser36 is subject to Phosphoserine. The segment at residues Phe87–Leu107 is an intramembrane region (helical). At Ser108–Asp162 the chain is on the cytoplasmic side.

It belongs to the caveolin family. In terms of assembly, monomer or homodimer. Interacts with CAV1; the interaction forms a stable heterooligomeric complex that is required for targeting to lipid rafts and for caveolae formation. Tyrosine phosphorylated forms do not form heterooligomers with the Tyr-19-phosphorylated form existing as a monomer or dimer, and the Tyr-27-form as a monomer only. Interacts (tyrosine phosphorylated form) with the SH2 domain-containing proteins, RASA1, NCK1 and SRC. Interacts (tyrosine phosphorylated form) with INSR, the interaction (Tyr-27-phosphorylated form) is increased on insulin stimulation. Interacts (Tyr-19 phosphorylated form) with MAPK1 (phosphorylated form); the interaction, promoted by insulin, leads to nuclear location and MAPK1 activation. Interacts with STAT3; the interaction is increased on insulin-induced tyrosine phosphorylation leading to STAT activation. In terms of processing, phosphorylated on serine and tyrosine residues. CAV1 promotes phosphorylation on Ser-23 which then targets the complex to the plasma membrane, lipid rafts and caveolae. Phosphorylation on Ser-36 appears to modulate mitosis in endothelial cells. Phosphorylation on both Tyr-19 and Tyr-27 is required for insulin-induced 'Ser-727' phosphorylation of STAT3 and its activation. Phosphorylation on Tyr-19 is required for insulin-induced phosphorylation of MAPK1 and DNA binding of STAT3. Tyrosine phosphorylation is induced by both EGF and insulin (By. similarity).

The protein resides in the nucleus. Its subcellular location is the cytoplasm. The protein localises to the golgi apparatus membrane. It localises to the cell membrane. It is found in the membrane. The protein resides in the caveola. Functionally, may act as a scaffolding protein within caveolar membranes. Interacts directly with G-protein alpha subunits and can functionally regulate their activity. Acts as an accessory protein in conjunction with CAV1 in targeting to lipid rafts and driving caveolae formation. The Ser-36 phosphorylated form has a role in modulating mitosis in endothelial cells. Positive regulator of cellular mitogenesis of the MAPK signaling pathway. Required for the insulin-stimulated nuclear translocation and activation of MAPK1 and STAT3, and the subsequent regulation of cell cycle progression. In Neofelis nebulosa (Clouded leopard), this protein is Caveolin-2 (CAV2).